The primary structure comprises 370 residues: Elongation factor Ts, mitochondrial (370 aa).

The transit peptide at 1 to 29 directs the protein to the mitochondrion; sequence MALLSAAPRALRLPRRLPLGAALPALRAL.

The protein belongs to the EF-Ts family.

The protein resides in the mitochondrion. Associates with the EF-Tu.GDP complex and induces the exchange of GDP to GTP. It remains bound to the aminoacyl-tRNA.EF-Tu.GTP complex up to the GTP hydrolysis stage on the ribosome. The polypeptide is Elongation factor Ts, mitochondrial (Cryptococcus neoformans var. neoformans serotype D (strain B-3501A) (Filobasidiella neoformans)).